Reading from the N-terminus, the 152-residue chain is Large ribosomal subunit protein uL22 (152 aa).

Residues 124–143 (APTKAASKKAAPAKQTTPAA) are compositionally biased toward low complexity. The tract at residues 124–152 (APTKAASKKAAPAKQTTPAATESKTEGAE) is disordered.

The protein belongs to the universal ribosomal protein uL22 family. Part of the 50S ribosomal subunit.

This protein binds specifically to 23S rRNA; its binding is stimulated by other ribosomal proteins, e.g. L4, L17, and L20. It is important during the early stages of 50S assembly. It makes multiple contacts with different domains of the 23S rRNA in the assembled 50S subunit and ribosome. Functionally, the globular domain of the protein is located near the polypeptide exit tunnel on the outside of the subunit, while an extended beta-hairpin is found that lines the wall of the exit tunnel in the center of the 70S ribosome. The polypeptide is Large ribosomal subunit protein uL22 (Salinispora arenicola (strain CNS-205)).